Here is a 491-residue protein sequence, read N- to C-terminus: uncharacterized protein (491 aa).

Residues 1 to 92 (MSFVIASPEA…GGGSYASAEI (92 aa)) form the PE domain. Disordered stretches follow at residues 114–156 (PLVG…AGGA), 376–400 (AGGS…GNPG), and 419–491 (AGQG…GPDG). The span at 128–145 (GQPGGDGGILWGNGGNGG) shows a compositional bias: gly residues. Residues 432-480 (GGPGGVGGHGGTAILFGDGGAGGAGAAGGPGTPDGAAGPGGSGGTGGLL) are compositionally biased toward gly residues.

It belongs to the mycobacterial PE family. PGRS subfamily.

This is an uncharacterized protein from Mycobacterium bovis (strain ATCC BAA-935 / AF2122/97).